Consider the following 661-residue polypeptide: ATP-dependent RNA helicase vasa (661 aa).

The span at 1–10 shows a compositional bias: acidic residues; it reads MSDDWDDEPI. Residues 1–186 form a disordered region; it reads MSDDWDDEPI…RRRRNEDDIN (186 aa). Ser22 is subject to Phosphoserine. Position 27 is a phosphothreonine (Thr27). Composition is skewed to gly residues over residues 38 to 52 and 60 to 83; these read DGVG…GYQG and RIGG…GGFH. Residues 85–95 show a composition bias toward basic and acidic residues; the sequence is GRREGERDFRG. 5 repeat units span residues 93–99, 100–106, 107–113, 114–120, and 121–127. A 5 X 7 AA tandem repeats of [FS]-R-G-G-[EQ]-G-G region spans residues 93–127; sequence FRGGEGGFRGGQGGSRGGQGGSRGGQGGFRGGEGG. Over residues 96 to 129 the composition is skewed to gly residues; that stretch reads GEGGFRGGQGGSRGGQGGSRGGQGGFRGGEGGFR. Residues 131 to 172 show a composition bias toward basic and acidic residues; sequence RLYENEDGDERRGRLDREERGGERRGRLDREERGGERGERGD. The B30.2/SPRY domain-binding motif motif lies at 184 to 188; that stretch reads DINNN. The tract at residues 184–203 is required for posterior localization in oocyte; sequence DINNNNNIVEDVERKREFYI. A Q motif motif is present at residues 245–273; the sequence is QHFTSADLRDIIIDNVNKSGYKIPTPIQK. The 178-residue stretch at 276–453 folds into the Helicase ATP-binding domain; it reads IPVISSGRDL…GEFLKNYVFV (178 aa). 289 to 296 provides a ligand contact to ATP; it reads AQTGSGKT. Positions 399–402 match the DEAD box motif; the sequence is DEAD. In terms of domain architecture, Helicase C-terminal spans 477–624; it reads KRSKLIEILS…TVPDFLRTCG (148 aa).

It belongs to the DEAD box helicase family. DDX4/VASA subfamily. Interacts with eIF5B and faf. Interacts with gus (via B30.2/SPRY domain) and Fsn (via B30.2/SPRY domain). Interacts with aub, me31B, eIF-4a and TER94. Interacts with piwi; this interaction is RNA independent. Interacts with Dcr-1 and Fmr1; these interactions occur in the polar granules. Requires Mg(2+) as cofactor. Ubiquitinated during oogenesis. Deubiquitinated by faf, which protects this protein from proteasome-mediated degradation. In terms of tissue distribution, abundantly expressed in the female germline. Gus and faf are required for vas expression in the posterior pole of the oocyte.

The protein resides in the cytoplasm. It localises to the perinuclear region. It is found in the cytoplasmic ribonucleoprotein granule. The enzyme catalyses ATP + H2O = ADP + phosphate + H(+). Functionally, involved in translational control mechanisms operating in early stages of oogenesis. Required maternally in many stages of oogenesis, including cystocyte differentiation, oocyte differentiation, and specification of anterior-posterior polarity in the developing cysts. Essential for the formation and/or structural integrity of perinuclear nuage particles during germ cell formation. Required for gus, Fsn and aub accumulation at the posterior pole of the embryo. Required for the localization of vas to the perinuclear region of nurse cells. May have a role in production of piwi-interacting RNA (piRNA). This Drosophila melanogaster (Fruit fly) protein is ATP-dependent RNA helicase vasa.